A 342-amino-acid chain; its full sequence is Farnesyl pyrophosphate synthase 1 (342 aa).

Isopentenyl diphosphate contacts are provided by Lys-47, Arg-50, and Gln-86. Mg(2+) is bound by residues Asp-93 and Asp-97. Dimethylallyl diphosphate is bound at residue Arg-102. Arg-103 contacts isopentenyl diphosphate. Positions 190, 191, 229, 246, and 255 each coordinate dimethylallyl diphosphate.

The protein belongs to the FPP/GGPP synthase family. Mg(2+) serves as cofactor.

It localises to the cytoplasm. The enzyme catalyses isopentenyl diphosphate + dimethylallyl diphosphate = (2E)-geranyl diphosphate + diphosphate. The catalysed reaction is isopentenyl diphosphate + (2E)-geranyl diphosphate = (2E,6E)-farnesyl diphosphate + diphosphate. It participates in isoprenoid biosynthesis; farnesyl diphosphate biosynthesis; farnesyl diphosphate from geranyl diphosphate and isopentenyl diphosphate: step 1/1. The protein operates within isoprenoid biosynthesis; geranyl diphosphate biosynthesis; geranyl diphosphate from dimethylallyl diphosphate and isopentenyl diphosphate: step 1/1. Catalyzes the sequential condensation of isopentenyl pyrophosphate with the allylic pyrophosphates, dimethylallyl pyrophosphate, and then with the resultant geranylpyrophosphate to the ultimate product farnesyl pyrophosphate. The protein is Farnesyl pyrophosphate synthase 1 (FPS1) of Lupinus albus (White lupine).